A 593-amino-acid polypeptide reads, in one-letter code: Elongation factor 4 (593 aa).

The 180-residue stretch at 2–181 folds into the tr-type G domain; that stretch reads DKIRNFCIIA…AVIERIPHPQ (180 aa). GTP is bound by residues 14 to 19 and 128 to 131; these read DHGKST and NKCD.

Belongs to the TRAFAC class translation factor GTPase superfamily. Classic translation factor GTPase family. LepA subfamily.

The protein resides in the cell inner membrane. The enzyme catalyses GTP + H2O = GDP + phosphate + H(+). Required for accurate and efficient protein synthesis under certain stress conditions. May act as a fidelity factor of the translation reaction, by catalyzing a one-codon backward translocation of tRNAs on improperly translocated ribosomes. Back-translocation proceeds from a post-translocation (POST) complex to a pre-translocation (PRE) complex, thus giving elongation factor G a second chance to translocate the tRNAs correctly. Binds to ribosomes in a GTP-dependent manner. The chain is Elongation factor 4 from Bacteroides fragilis (strain ATCC 25285 / DSM 2151 / CCUG 4856 / JCM 11019 / LMG 10263 / NCTC 9343 / Onslow / VPI 2553 / EN-2).